A 679-amino-acid polypeptide reads, in one-letter code: NADPH--cytochrome P450 reductase (679 aa).

Residues 1 to 21 (MASEQTIDGAAAIPSGGGDEP) are Lumenal-facing. A helical transmembrane segment spans residues 22 to 42 (FLGLLDVALLAVLIGGAAFYF). Over 43 to 679 (LRSRKKEEEP…QKRYSADVWS (637 aa)) the chain is Cytoplasmic. Residues 84–228 (LVVFYGSQTG…DFITWKDRFW (145 aa)) enclose the Flavodoxin-like domain. Residues 90 to 95 (SQTGTG), 142 to 145 (ATYG), 177 to 186 (LGNKTYEHYN), and Asp212 contribute to the FMN site. One can recognise an FAD-binding FR-type domain in the interval 283 to 523 (KNPFLAPIKV…FIRKSQFRLP (241 aa)). Arg302 is a binding site for NADP(+). FAD contacts are provided by residues 458-461 (RYYS), 476-478 (TAV), Tyr482, and 492-495 (GVAT). NADP(+) contacts are provided by residues Thr537, 597–598 (SR), 603–607 (KVYVQ), and Asp640. Trp678 is an FAD binding site.

Belongs to the NADPH--cytochrome P450 reductase family. It in the N-terminal section; belongs to the flavodoxin family. This sequence in the C-terminal section; belongs to the flavoprotein pyridine nucleotide cytochrome reductase family. As to quaternary structure, interacts with sturkopf. It depends on FAD as a cofactor. Requires FMN as cofactor. As to expression, high in antennae.

The protein resides in the endoplasmic reticulum membrane. It catalyses the reaction 2 oxidized [cytochrome P450] + NADPH = 2 reduced [cytochrome P450] + NADP(+) + H(+). Functionally, this enzyme is required for electron transfer from NADP to cytochrome p450 in microsomes. It can also provide electron transfer to heme oxygenase and cytochrome b5. May function to clear the olfactory organ (antennae) from accumulating chemicals. This chain is NADPH--cytochrome P450 reductase (Cpr), found in Drosophila melanogaster (Fruit fly).